Consider the following 261-residue polypeptide: Cytochrome c oxidase subunit 3 (261 aa).

Residues 1–15 (MTHQTHACHMVNPSP) lie on the Mitochondrial matrix side of the membrane. Residues 16–34 (WPLTGALSGLLMTSGLIMW) form a helical membrane-spanning segment. Residues 35–40 (FHFNST) are Mitochondrial intermembrane-facing. A helical membrane pass occupies residues 41–66 (TLLMLGLTTNMLTMYQWWRDVIREST). At 67-72 (FQGHHT) the chain is on the mitochondrial matrix side. Residues 73–105 (PNVQKGLRYGMILFIISEVLFFTGFFWAFYHSS) traverse the membrane as a helical segment. Topologically, residues 106-128 (LAPTPELGGCWPPTGIHPLNPLE) are mitochondrial intermembrane. Residues 129-152 (VPLLNTSVLLASGVSITWAHHSLM) traverse the membrane as a helical segment. Topologically, residues 153–155 (EGN) are mitochondrial matrix. A helical membrane pass occupies residues 156–183 (RNHMLQALFITIALGVYFTLLQASEYYE). At 184–190 (APFTISD) the chain is on the mitochondrial intermembrane side. A helical transmembrane segment spans residues 191-223 (GVYGSTFFVATGFHGLHVIIGSTFLIVCFFRQL). Residues 224 to 232 (KFHFTSSHH) lie on the Mitochondrial matrix side of the membrane. The chain crosses the membrane as a helical span at residues 233-256 (FGFEAAAWYWHFVDVVWLFLYVSI). Residues 257–261 (YWWGS) are Mitochondrial intermembrane-facing.

It belongs to the cytochrome c oxidase subunit 3 family. As to quaternary structure, component of the cytochrome c oxidase (complex IV, CIV), a multisubunit enzyme composed of 14 subunits. The complex is composed of a catalytic core of 3 subunits MT-CO1, MT-CO2 and MT-CO3, encoded in the mitochondrial DNA, and 11 supernumerary subunits COX4I, COX5A, COX5B, COX6A, COX6B, COX6C, COX7A, COX7B, COX7C, COX8 and NDUFA4, which are encoded in the nuclear genome. The complex exists as a monomer or a dimer and forms supercomplexes (SCs) in the inner mitochondrial membrane with NADH-ubiquinone oxidoreductase (complex I, CI) and ubiquinol-cytochrome c oxidoreductase (cytochrome b-c1 complex, complex III, CIII), resulting in different assemblies (supercomplex SCI(1)III(2)IV(1) and megacomplex MCI(2)III(2)IV(2)).

The protein localises to the mitochondrion inner membrane. The catalysed reaction is 4 Fe(II)-[cytochrome c] + O2 + 8 H(+)(in) = 4 Fe(III)-[cytochrome c] + 2 H2O + 4 H(+)(out). Its function is as follows. Component of the cytochrome c oxidase, the last enzyme in the mitochondrial electron transport chain which drives oxidative phosphorylation. The respiratory chain contains 3 multisubunit complexes succinate dehydrogenase (complex II, CII), ubiquinol-cytochrome c oxidoreductase (cytochrome b-c1 complex, complex III, CIII) and cytochrome c oxidase (complex IV, CIV), that cooperate to transfer electrons derived from NADH and succinate to molecular oxygen, creating an electrochemical gradient over the inner membrane that drives transmembrane transport and the ATP synthase. Cytochrome c oxidase is the component of the respiratory chain that catalyzes the reduction of oxygen to water. Electrons originating from reduced cytochrome c in the intermembrane space (IMS) are transferred via the dinuclear copper A center (CU(A)) of subunit 2 and heme A of subunit 1 to the active site in subunit 1, a binuclear center (BNC) formed by heme A3 and copper B (CU(B)). The BNC reduces molecular oxygen to 2 water molecules using 4 electrons from cytochrome c in the IMS and 4 protons from the mitochondrial matrix. This Gazella saudiya (Saudi gazelle) protein is Cytochrome c oxidase subunit 3 (MT-CO3).